The chain runs to 323 residues: Calcium homeostasis modulator protein 2 (323 aa).

Residues 1-21 lie on the Cytoplasmic side of the membrane; sequence MAALIAENFRFLSLFFKSKDV. The interval 14–39 is central pore; sequence LFFKSKDVMIFNGLVALGTVGSQELF. The helical transmembrane segment at 22–43 threads the bilayer; it reads MIFNGLVALGTVGSQELFSVVA. Topologically, residues 44–52 are extracellular; that stretch reads FHCPCSPAR. 2 disulfides stabilise this stretch: cysteine 46/cysteine 130 and cysteine 48/cysteine 162. The helical transmembrane segment at 53–76 threads the bilayer; it reads NYLYGLTAIGVPALALFLIGVILN. Residues 77 to 101 lie on the Cytoplasmic side of the membrane; it reads NHTWNLVAECQYRRAKNCSAAPTFL. A helical membrane pass occupies residues 102–132; the sequence is LLSSILGRAAVAPVTWSVISLLRGEAYVCAL. Residues 133 to 179 lie on the Extracellular side of the membrane; sequence SEFVDPSSLTAGDEGFPPDHATEILARFPCGEGPANLSGFREEVSRR. Residues 145-152 form a hemichannel docking region; it reads DEGFPPDH. The helical transmembrane segment at 180 to 206 threads the bilayer; sequence LKYESQLFGWLLIGVVAILVFLTKCFK. Residues 207 to 323 lie on the Cytoplasmic side of the membrane; it reads HYCSPLSYRQ…DNVEMALLTV (117 aa). The segment at 214–251 is intersubunit interaction; it reads YRQEAYWAQYRTNEDQLFQRTAEVHSRVLAANNVRRFF.

Belongs to the CALHM family. Homo-undecamer. Two undecameric hemichannels can assemble in a head-to-head manner to form a gap junction.

It localises to the cell membrane. The catalysed reaction is ATP(in) = ATP(out). Pore-forming subunit of Ca(2+) homeostasis modulator channels. Mediates ATP release from astrocytes and ATP-induced Ca(2+) influx in microglia thus regulating neuronal ATP and Ca(2+) homeostasis, synaptic transmission and neuroinflammatory response. May form intercellular gap junctions. The gating mechanism remains unknown. The sequence is that of Calcium homeostasis modulator protein 2 (Calhm2) from Rattus norvegicus (Rat).